A 105-amino-acid polypeptide reads, in one-letter code: ATP synthase subunit c (105 aa).

Transmembrane regions (helical) follow at residues 3-23 (FLALFFLALAGVAFAHDGGMG), 32-52 (SILGAMIGLGIAAFGGAIGMG), and 78-98 (VAMAMIEAQVIYTLVFAIIAI).

This sequence belongs to the ATPase C chain family. F-type ATPases have 2 components, F(1) - the catalytic core - and F(0) - the membrane proton channel. F(1) has five subunits: alpha(3), beta(3), gamma(1), delta(1), epsilon(1). F(0) has three main subunits: a(1), b(2) and c(10-14). The alpha and beta chains form an alternating ring which encloses part of the gamma chain. F(1) is attached to F(0) by a central stalk formed by the gamma and epsilon chains, while a peripheral stalk is formed by the delta and b chains.

Its subcellular location is the cell inner membrane. Its function is as follows. F(1)F(0) ATP synthase produces ATP from ADP in the presence of a proton or sodium gradient. F-type ATPases consist of two structural domains, F(1) containing the extramembraneous catalytic core and F(0) containing the membrane proton channel, linked together by a central stalk and a peripheral stalk. During catalysis, ATP synthesis in the catalytic domain of F(1) is coupled via a rotary mechanism of the central stalk subunits to proton translocation. Functionally, key component of the F(0) channel; it plays a direct role in translocation across the membrane. A homomeric c-ring of between 10-14 subunits forms the central stalk rotor element with the F(1) delta and epsilon subunits. This is ATP synthase subunit c from Helicobacter pylori (strain P12).